The following is a 78-amino-acid chain: UPF0270 protein ECA4061 (78 aa).

This sequence belongs to the UPF0270 family.

The polypeptide is UPF0270 protein ECA4061 (Pectobacterium atrosepticum (strain SCRI 1043 / ATCC BAA-672) (Erwinia carotovora subsp. atroseptica)).